The chain runs to 328 residues: Porphobilinogen deaminase (328 aa).

Cys250 is subject to S-(dipyrrolylmethanemethyl)cysteine.

Belongs to the HMBS family. In terms of assembly, monomer. Requires dipyrromethane as cofactor.

It carries out the reaction 4 porphobilinogen + H2O = hydroxymethylbilane + 4 NH4(+). Its pathway is porphyrin-containing compound metabolism; protoporphyrin-IX biosynthesis; coproporphyrinogen-III from 5-aminolevulinate: step 2/4. In terms of biological role, tetrapolymerization of the monopyrrole PBG into the hydroxymethylbilane pre-uroporphyrinogen in several discrete steps. The protein is Porphobilinogen deaminase of Burkholderia ambifaria (strain ATCC BAA-244 / DSM 16087 / CCUG 44356 / LMG 19182 / AMMD) (Burkholderia cepacia (strain AMMD)).